The chain runs to 401 residues: Membrane protein UL43 homolog (401 aa).

A run of 10 helical transmembrane segments spans residues 43-63, 67-87, 93-113, 124-144, 159-179, 182-202, 259-279, 294-314, 332-352, and 379-399; these read FVGI…IDLL, STCL…RVPI, IVTV…SVWV, LIVV…ISLF, ASLL…LVEL, VPIG…FGLA, PGVI…WIVL, YVVF…QLVI, AVCM…SLAF, and ISRW…ATII.

Belongs to the alphaherpesvirinae HHV-1 UL43 family.

Its subcellular location is the membrane. The protein is Membrane protein UL43 homolog of Equine herpesvirus 1 (strain Ab4p) (EHV-1).